The sequence spans 134 residues: Small ribosomal subunit protein uS8c (134 aa).

It belongs to the universal ribosomal protein uS8 family. As to quaternary structure, part of the 30S ribosomal subunit.

The protein localises to the plastid. Its subcellular location is the chloroplast. One of the primary rRNA binding proteins, it binds directly to 16S rRNA central domain where it helps coordinate assembly of the platform of the 30S subunit. This chain is Small ribosomal subunit protein uS8c (rps8), found in Ipomoea purpurea (Common morning glory).